The sequence spans 107 residues: Replication initiation control protein YabA (107 aa).

The Zn(2+) site is built by histidine 81, cysteine 83, cysteine 97, and cysteine 100.

This sequence belongs to the YabA family. In terms of assembly, homotetramer. Interacts with both DnaA and DnaN, acting as a bridge between these two proteins. It depends on Zn(2+) as a cofactor.

It is found in the cytoplasm. The protein resides in the nucleoid. Functionally, involved in control of chromosome replication initiation. Inhibits the cooperative binding of DnaA to the oriC region, thus negatively regulating initiation of chromosome replication. Inhibits the ability of DnaA-ATP to form a helix on DNA; does not disassemble preformed DnaA-DNA helices. Decreases the residence time of DnaA on the chromosome at its binding sites (oriC, replication forks and promoter-binding sites). Tethers DnaA to the replication machinery via the DNA polymerase beta sliding clamp subunit (dnaN). Associates with oriC and other DnaA targets on the chromosome in a DnaA-dependent manner. The sequence is that of Replication initiation control protein YabA from Streptococcus pyogenes serotype M18 (strain MGAS8232).